Reading from the N-terminus, the 358-residue chain is Peptide chain release factor 1 (358 aa).

The residue at position 235 (glutamine 235) is an N5-methylglutamine.

The protein belongs to the prokaryotic/mitochondrial release factor family. Post-translationally, methylated by PrmC. Methylation increases the termination efficiency of RF1.

The protein resides in the cytoplasm. Functionally, peptide chain release factor 1 directs the termination of translation in response to the peptide chain termination codons UAG and UAA. This Neisseria gonorrhoeae (strain NCCP11945) protein is Peptide chain release factor 1.